A 447-amino-acid chain; its full sequence is Phosphoglucosamine mutase (447 aa).

Serine 88 serves as the catalytic Phosphoserine intermediate. Residues serine 88, aspartate 231, aspartate 233, and aspartate 235 each coordinate Mg(2+). Serine 88 is subject to Phosphoserine.

This sequence belongs to the phosphohexose mutase family. The cofactor is Mg(2+). Activated by phosphorylation.

It carries out the reaction alpha-D-glucosamine 1-phosphate = D-glucosamine 6-phosphate. Functionally, catalyzes the conversion of glucosamine-6-phosphate to glucosamine-1-phosphate. The sequence is that of Phosphoglucosamine mutase from Methanococcus maripaludis (strain C7 / ATCC BAA-1331).